A 359-amino-acid polypeptide reads, in one-letter code: 4-hydroxy-3-methylbut-2-en-1-yl diphosphate synthase (flavodoxin) (359 aa).

[4Fe-4S] cluster is bound by residues cysteine 265, cysteine 268, cysteine 300, and glutamate 307.

Belongs to the IspG family. [4Fe-4S] cluster serves as cofactor.

It carries out the reaction (2E)-4-hydroxy-3-methylbut-2-enyl diphosphate + oxidized [flavodoxin] + H2O + 2 H(+) = 2-C-methyl-D-erythritol 2,4-cyclic diphosphate + reduced [flavodoxin]. It functions in the pathway isoprenoid biosynthesis; isopentenyl diphosphate biosynthesis via DXP pathway; isopentenyl diphosphate from 1-deoxy-D-xylulose 5-phosphate: step 5/6. In terms of biological role, converts 2C-methyl-D-erythritol 2,4-cyclodiphosphate (ME-2,4cPP) into 1-hydroxy-2-methyl-2-(E)-butenyl 4-diphosphate. The chain is 4-hydroxy-3-methylbut-2-en-1-yl diphosphate synthase (flavodoxin) from Lawsonia intracellularis (strain PHE/MN1-00).